A 120-amino-acid polypeptide reads, in one-letter code: Large ribosomal subunit protein uL24 (120 aa).

The disordered stretch occupies residues 1 to 26; the sequence is MVRVISSQPRKQRKARYNAPHHMRGS. Positions 10–24 are enriched in basic residues; it reads RKQRKARYNAPHHMR.

This sequence belongs to the universal ribosomal protein uL24 family. As to quaternary structure, part of the 50S ribosomal subunit.

In terms of biological role, one of two assembly initiator proteins, it binds directly to the 5'-end of the 23S rRNA, where it nucleates assembly of the 50S subunit. Functionally, located at the polypeptide exit tunnel on the outside of the subunit. This Methanospirillum hungatei JF-1 (strain ATCC 27890 / DSM 864 / NBRC 100397 / JF-1) protein is Large ribosomal subunit protein uL24.